We begin with the raw amino-acid sequence, 233 residues long: Ribosomal RNA small subunit methyltransferase G (233 aa).

The tract at residues 1–25 is disordered; it reads MASRQSPMAVSQPDHADRSAALQLT. S-adenosyl-L-methionine is bound by residues G85, F90, and R155.

Belongs to the methyltransferase superfamily. RNA methyltransferase RsmG family.

The protein localises to the cytoplasm. The catalysed reaction is guanosine(527) in 16S rRNA + S-adenosyl-L-methionine = N(7)-methylguanosine(527) in 16S rRNA + S-adenosyl-L-homocysteine. Functionally, specifically methylates the N7 position of guanine in position 527 of 16S rRNA. The protein is Ribosomal RNA small subunit methyltransferase G of Rhodopseudomonas palustris (strain BisB5).